The following is a 138-amino-acid chain: Large ribosomal subunit protein uL14 (138 aa).

Belongs to the universal ribosomal protein uL14 family. As to quaternary structure, part of the 50S ribosomal subunit. Forms a cluster with proteins L3 and L24e, part of which may contact the 16S rRNA in 2 intersubunit bridges.

Functionally, binds to 23S rRNA. Forms part of two intersubunit bridges in the 70S ribosome. The chain is Large ribosomal subunit protein uL14 from Metallosphaera sedula (strain ATCC 51363 / DSM 5348 / JCM 9185 / NBRC 15509 / TH2).